Consider the following 99-residue polypeptide: MGLFMIIAILLFQKPTVTEQLKKCWNNYVQGHCRKICRVNEVPEALCENGRYCCLNIKELEACKKITKPSHPKPATLALTLQDYVTIIENFPSLKTQST.

The signal sequence occupies residues M1 to Q20. Cystine bridges form between C24/C53, C33/C47, and C37/C54. Positions I66–T99 are excised as a propeptide.

Belongs to the beta-defensin family.

It localises to the secreted. In terms of biological role, has antibacterial activity. The chain is Beta-defensin 127 (DEFB127) from Pan troglodytes (Chimpanzee).